The chain runs to 75 residues: Translational regulator CsrA (75 aa).

This sequence belongs to the CsrA/RsmA family. As to quaternary structure, homodimer; the beta-strands of each monomer intercalate to form a hydrophobic core, while the alpha-helices form wings that extend away from the core.

It localises to the cytoplasm. Functionally, a translational regulator that binds mRNA to regulate translation initiation and/or mRNA stability. Usually binds in the 5'-UTR at or near the Shine-Dalgarno sequence preventing ribosome-binding, thus repressing translation. Its main target seems to be the major flagellin gene, while its function is anatagonized by FliW. The sequence is that of Translational regulator CsrA from Exiguobacterium sibiricum (strain DSM 17290 / CCUG 55495 / CIP 109462 / JCM 13490 / 255-15).